The following is a 29-amino-acid chain: Cyclotide mela-7 (29 aa).

The cyclopeptide (Gly-Asn) cross-link spans 1–29 (GLPTCGETCFKGKCYTPGCSCSYPICKKN). 3 disulfides stabilise this stretch: Cys5–Cys19, Cys9–Cys21, and Cys14–Cys26.

Post-translationally, this is a cyclic peptide. In terms of processing, contains 3 disulfide bonds.

In terms of biological role, probably participates in a plant defense mechanism (Potential). Binds to and induces leakage in phospholipd membranes, particularly ones containing 1-palmitoyl-2-oleophosphatidylethanolamine (POPE). In vitro, displays cytotoxicity against cultured cells but no hemolytic activity towards fresh erythrocytes. Not active against Gram-negative bacterium E.coli ATCC 25922 or Gram-positive bacterium S.aureus ATCC 25923 up to a concentration of 64 uM. In Melicytus latifolius (Norfolk Island mahoe), this protein is Cyclotide mela-7.